The sequence spans 88 residues: Protein ORGAN SIZE RELATED 1 (88 aa).

Positions 25 to 76 (ITARSVALLLFLSLLLLILPPFLPPLPPPPATLLLLPLLLMILLIFLAFSPS) are organ Size Related (OSR) domain. 2 consecutive transmembrane segments (helical) span residues 30–50 (VALL…LPPL) and 53–73 (PPAT…FLAF).

Belongs to the plant organ size related (OSR) protein family. In terms of tissue distribution, mostly expressed in flowers, and, to a lower extent, in leaves and cotyledons.

The protein resides in the membrane. It localises to the endoplasmic reticulum. The protein localises to the nucleus. It is found in the cytoplasm. In terms of biological role, together with ARGOS and ARL, regulates organ growth and final organ size. Promotes both cell expansion and proliferation-dependent organ growth, in an ANT-dependent manner. The protein is Protein ORGAN SIZE RELATED 1 of Arabidopsis thaliana (Mouse-ear cress).